Consider the following 145-residue polypeptide: D-aminoacyl-tRNA deacylase (145 aa).

A Gly-cisPro motif, important for rejection of L-amino acids motif is present at residues 137-138; that stretch reads GP.

Belongs to the DTD family. Homodimer.

It is found in the cytoplasm. The catalysed reaction is glycyl-tRNA(Ala) + H2O = tRNA(Ala) + glycine + H(+). It carries out the reaction a D-aminoacyl-tRNA + H2O = a tRNA + a D-alpha-amino acid + H(+). An aminoacyl-tRNA editing enzyme that deacylates mischarged D-aminoacyl-tRNAs. Also deacylates mischarged glycyl-tRNA(Ala), protecting cells against glycine mischarging by AlaRS. Acts via tRNA-based rather than protein-based catalysis; rejects L-amino acids rather than detecting D-amino acids in the active site. By recycling D-aminoacyl-tRNA to D-amino acids and free tRNA molecules, this enzyme counteracts the toxicity associated with the formation of D-aminoacyl-tRNA entities in vivo and helps enforce protein L-homochirality. In Shewanella woodyi (strain ATCC 51908 / MS32), this protein is D-aminoacyl-tRNA deacylase.